The primary structure comprises 164 residues: Zinc finger A20 and AN1 domain-containing stress-associated protein 1 (164 aa).

The A20-type zinc finger occupies 16 to 50; that stretch reads APEITLCANSCGFPGNPATQNLCQNCFLAATASTS. 4 residues coordinate Zn(2+): C22, C26, C38, and C41. Residues 48–58 are compositionally biased toward low complexity; that stretch reads STSSPSSLSSP. The interval 48–81 is disordered; sequence STSSPSSLSSPVLDKQPPRPAAPLVEPQAPLPPP. The AN1-type zinc-finger motif lies at 99–145; that stretch reads TSAVNRCSRCRKRVGLTGFRCRCGHLFCGEHRYSDRHGCSYDYKSAA. Zn(2+) is bound by residues C105, C108, C119, C121, C126, H129, H135, and C137.

In terms of biological role, may be involved in environmental stress response. This Oryza sativa subsp. indica (Rice) protein is Zinc finger A20 and AN1 domain-containing stress-associated protein 1 (SAP1).